The primary structure comprises 222 residues: Cytochrome b6 (222 aa).

The helical transmembrane segment at 39–59 (IFYCLGGITLVCFLVQFATGF) threads the bilayer. Cysteine 42 lines the heme c pocket. Heme b contacts are provided by histidine 93 and histidine 107. Helical transmembrane passes span 97-117 (ASMMVLMMILHVFRVYLTGGF), 123-143 (LTWMTGVILAVITVSFGVTGY), and 193-213 (LHTFVFPWLIAVFMLAHFLMI). Positions 194 and 209 each coordinate heme b.

This sequence belongs to the cytochrome b family. PetB subfamily. As to quaternary structure, the 4 large subunits of the cytochrome b6-f complex are cytochrome b6, subunit IV (17 kDa polypeptide, PetD), cytochrome f and the Rieske protein, while the 4 small subunits are PetG, PetL, PetM and PetN. The complex functions as a dimer. Heme b is required as a cofactor. Requires heme c as cofactor.

It is found in the cellular thylakoid membrane. Its function is as follows. Component of the cytochrome b6-f complex, which mediates electron transfer between photosystem II (PSII) and photosystem I (PSI), cyclic electron flow around PSI, and state transitions. This is Cytochrome b6 from Crocosphaera subtropica (strain ATCC 51142 / BH68) (Cyanothece sp. (strain ATCC 51142)).